A 360-amino-acid chain; its full sequence is Peptide chain release factor 1 (360 aa).

Gln235 is modified (N5-methylglutamine). A disordered region spans residues 285–311 (KRQQAQASERRNLLGSGDRSDRHRTYN). A compositionally biased stretch (basic and acidic residues) spans 292-308 (SERRNLLGSGDRSDRHR).

This sequence belongs to the prokaryotic/mitochondrial release factor family. Methylated by PrmC. Methylation increases the termination efficiency of RF1.

Its subcellular location is the cytoplasm. Its function is as follows. Peptide chain release factor 1 directs the termination of translation in response to the peptide chain termination codons UAG and UAA. The protein is Peptide chain release factor 1 of Hamiltonella defensa subsp. Acyrthosiphon pisum (strain 5AT).